Consider the following 150-residue polypeptide: Ribonuclease pancreatic (150 aa).

An N-terminal signal peptide occupies residues 1 to 26; that stretch reads MALKSLVLLSLLVLVLLLVRVQPSLG. N-linked (Glc) (glycation) lysine; in vitro glycosylation is found at lysine 27 and lysine 33. Residues lysine 33 and arginine 36 each coordinate substrate. The Proton acceptor role is filled by histidine 38. Disulfide bonds link cysteine 52-cysteine 110, cysteine 66-cysteine 121, cysteine 84-cysteine 136, and cysteine 91-cysteine 98. N-linked (GlcNAc...) asparagine; partial glycosylation is present at asparagine 60. N-linked (Glc) (glycation) lysine; in vitro glycosylation is found at lysine 63 and lysine 67. Substrate is bound by residues 67-71, lysine 92, and arginine 111; that span reads KPVNT. Histidine 145 functions as the Proton donor in the catalytic mechanism.

It belongs to the pancreatic ribonuclease family. As to quaternary structure, interacts with and forms tight 1:1 complexes with RNH1. Dimerization of two such complexes may occur. Interaction with RNH1 inhibits this protein. Monomer. Pancreas.

It is found in the secreted. It catalyses the reaction an [RNA] containing cytidine + H2O = an [RNA]-3'-cytidine-3'-phosphate + a 5'-hydroxy-ribonucleotide-3'-[RNA].. It carries out the reaction an [RNA] containing uridine + H2O = an [RNA]-3'-uridine-3'-phosphate + a 5'-hydroxy-ribonucleotide-3'-[RNA].. Its function is as follows. Endonuclease that catalyzes the cleavage of RNA on the 3' side of pyrimidine nucleotides. Acts on single-stranded and double-stranded RNA. This is Ribonuclease pancreatic (RNASE1) from Bos taurus (Bovine).